Consider the following 448-residue polypeptide: Homogentisate 1,2-dioxygenase (448 aa).

The Proton acceptor role is filled by His-303. Fe cation is bound by residues His-346 and Glu-352. Residues Tyr-361 and His-382 each contribute to the homogentisate site. His-382 is a binding site for Fe cation.

It belongs to the homogentisate dioxygenase family. In terms of assembly, hexamer; dimer of trimers. Fe cation serves as cofactor.

The enzyme catalyses homogentisate + O2 = 4-maleylacetoacetate + H(+). It participates in amino-acid degradation; L-phenylalanine degradation; acetoacetate and fumarate from L-phenylalanine: step 4/6. In terms of biological role, involved in the catabolism of homogentisate (2,5-dihydroxyphenylacetate or 2,5-OH-PhAc), a central intermediate in the degradation of phenylalanine and tyrosine. Catalyzes the oxidative ring cleavage of the aromatic ring of homogentisate to yield maleylacetoacetate. This is Homogentisate 1,2-dioxygenase from Rhodopseudomonas palustris (strain BisB5).